The chain runs to 453 residues: MSGPAMVHQEPYSVQATAAIASAITFLILFTIFGNALVILAVLTSRSLRAPQNLFLVSLAAADILVATLIIPFSLANELLGYWYFWRAWCEVYLALDVLFCTSSIVHLCAISLDRYWAVSRALEYNSKRTPRRIKCIILTVWLIAAVISLPPLIYKGDQRPEPHGLPQCELNQEAWYILASSIGSFFAPCLIMILVYLRIYVIAKRSHCRGLGAKRGSGEGESKKPHPAAGGVPASAKVPTLVSPLSSVGEANGHPKPPREKEEGETPEDPEARALPPNWSALPRSVQDQKKGTSGATAEKGAEEDEEEVEECEPQTLPASPASVFNPPLQQPQTSRVLATLRGQVLLSKNVGVASGQWWRRRTQLSREKRFTFVLAVVIGVFVVCWFPFFFSYSLGAICPQHCKVPHGLFQFFFWIGYCNSSLNPVIYTIFNQDFRRAFRRILCRQWTQTGW.

Over 1–17 (MSGPAMVHQEPYSVQAT) the chain is Extracellular. Residues 18–42 (AAIASAITFLILFTIFGNALVILAV) form a helical membrane-spanning segment. The Cytoplasmic segment spans residues 43-54 (LTSRSLRAPQNL). Residues 55 to 80 (FLVSLAAADILVATLIIPFSLANELL) traverse the membrane as a helical segment. Over 81–90 (GYWYFWRAWC) the chain is Extracellular. A disulfide bridge connects residues cysteine 90 and cysteine 169. The helical transmembrane segment at 91 to 113 (EVYLALDVLFCTSSIVHLCAISL) threads the bilayer. The Cytoplasmic portion of the chain corresponds to 114-135 (DRYWAVSRALEYNSKRTPRRIK). A helical transmembrane segment spans residues 136–158 (CIILTVWLIAAVISLPPLIYKGD). Residues 159–174 (QRPEPHGLPQCELNQE) are Extracellular-facing. Residues 175–198 (AWYILASSIGSFFAPCLIMILVYL) form a helical membrane-spanning segment. At 199-375 (RIYVIAKRSH…LSREKRFTFV (177 aa)) the chain is on the cytoplasmic side. A disordered region spans residues 214 to 329 (AKRGSGEGES…ASPASVFNPP (116 aa)). Residues 303-314 (AEEDEEEVEECE) show a composition bias toward acidic residues. Residues 376–399 (LAVVIGVFVVCWFPFFFSYSLGAI) form a helical membrane-spanning segment. The Extracellular segment spans residues 400–408 (CPQHCKVPH). A helical membrane pass occupies residues 409 to 432 (GLFQFFFWIGYCNSSLNPVIYTIF). Over 433-453 (NQDFRRAFRRILCRQWTQTGW) the chain is Cytoplasmic. Residue cysteine 445 is the site of S-palmitoyl cysteine attachment.

The protein belongs to the G-protein coupled receptor 1 family. Adrenergic receptor subfamily. ADRA2B sub-subfamily. In terms of assembly, interacts with RAB26. Interacts with PPP1R9B. Interacts with GGA1, GGA2 and GGA3.

The protein localises to the cell membrane. In terms of biological role, alpha-2 adrenergic receptors mediate the catecholamine-induced inhibition of adenylate cyclase through the action of G proteins. The sequence is that of Alpha-2B adrenergic receptor (Adra2b) from Mus musculus (Mouse).